The chain runs to 88 residues: Large ribosomal subunit protein bL27 (88 aa).

This sequence belongs to the bacterial ribosomal protein bL27 family.

This Mycobacterium leprae (strain TN) protein is Large ribosomal subunit protein bL27.